A 458-amino-acid polypeptide reads, in one-letter code: Succinate-semialdehyde dehydrogenase [NADP(+)] 1 (458 aa).

Residues 134-135 (WN), 158-161 (KHAS), and 210-211 (GS) each bind NADP(+). The Proton acceptor role is filled by E232. Position 233 (L233) interacts with NADP(+). The Nucleophile role is filled by C266. E363 contacts NADP(+).

Belongs to the aldehyde dehydrogenase family.

The enzyme catalyses succinate semialdehyde + NADP(+) + H2O = succinate + NADPH + 2 H(+). Functionally, catalyzes the NADP(+)-dependent oxidation of succinate semialdehyde to succinate. It is believed to be the main source of succinate semialdehyde dehydrogenase activity in Mycobacterium. The polypeptide is Succinate-semialdehyde dehydrogenase [NADP(+)] 1 (gabD1) (Mycobacterium ulcerans (strain Agy99)).